A 495-amino-acid polypeptide reads, in one-letter code: Beta-galactoside alpha-2,6-sialyltransferase 2 (495 aa).

Residues 1-10 (MKPHLKQWRQ) lie on the Cytoplasmic side of the membrane. The helical; Signal-anchor for type II membrane protein transmembrane segment at 11 to 31 (GMLCGVFAWGLFFVVIFLYFT) threads the bilayer. Residues 32–495 (DSSPAKPAPS…LQAVRCPPGA (464 aa)) are Lumenal-facing. Disordered regions lie at residues 63–90 (GASE…LRTW) and 107–165 (GRTS…EDGE). Residues 134–143 (PEGARPPRAA) show a composition bias toward low complexity. Residues 144-153 (PGRRAKRGPR) are compositionally biased toward basic residues. 3 disulfides stabilise this stretch: Cys-225–Cys-491, Cys-268–Cys-420, and Cys-438–Cys-449. N-linked (GlcNAc...) asparagine glycans are attached at residues Asn-279 and Asn-309.

This sequence belongs to the glycosyltransferase 29 family.

It is found in the golgi apparatus. It localises to the golgi stack membrane. The catalysed reaction is a beta-D-galactoside + CMP-N-acetyl-beta-neuraminate = an N-acetyl-alpha-neuraminyl-(2-&gt;6)-beta-D-galactosyl derivative + CMP + H(+). In terms of biological role, transfers sialic acid from the donor of substrate CMP-sialic acid to galactose containing acceptor substrates. Has alpha-2,6-sialyltransferase activity toward oligosaccharides that have the Gal-beta-1,4-GlcNAc sequence at the non-reducing end of their carbohydrate groups, but it has weak or no activities toward glycoproteins and glycolipids. This Bos taurus (Bovine) protein is Beta-galactoside alpha-2,6-sialyltransferase 2 (ST6GAL2).